A 208-amino-acid polypeptide reads, in one-letter code: FMN-dependent NADH:quinone oxidoreductase 2 (208 aa).

Residue 17–19 (SVS) coordinates FMN.

This sequence belongs to the azoreductase type 1 family. Homodimer. It depends on FMN as a cofactor.

It carries out the reaction 2 a quinone + NADH + H(+) = 2 a 1,4-benzosemiquinone + NAD(+). The enzyme catalyses N,N-dimethyl-1,4-phenylenediamine + anthranilate + 2 NAD(+) = 2-(4-dimethylaminophenyl)diazenylbenzoate + 2 NADH + 2 H(+). Quinone reductase that provides resistance to thiol-specific stress caused by electrophilic quinones. In terms of biological role, also exhibits azoreductase activity. Catalyzes the reductive cleavage of the azo bond in aromatic azo compounds to the corresponding amines. The sequence is that of FMN-dependent NADH:quinone oxidoreductase 2 from Halalkalibacterium halodurans (strain ATCC BAA-125 / DSM 18197 / FERM 7344 / JCM 9153 / C-125) (Bacillus halodurans).